The primary structure comprises 209 residues: Large ribosomal subunit protein uL3 (209 aa).

The tract at residues Thr133–Pro152 is disordered. Residue Gln150 is modified to N5-methylglutamine.

This sequence belongs to the universal ribosomal protein uL3 family. In terms of assembly, part of the 50S ribosomal subunit. Forms a cluster with proteins L14 and L19. In terms of processing, methylated by PrmB.

Its function is as follows. One of the primary rRNA binding proteins, it binds directly near the 3'-end of the 23S rRNA, where it nucleates assembly of the 50S subunit. The polypeptide is Large ribosomal subunit protein uL3 (Sodalis glossinidius (strain morsitans)).